The sequence spans 439 residues: Methylenetetrahydrofolate--tRNA-(uracil-5-)-methyltransferase TrmFO (439 aa).

FAD is bound at residue 7–12; that stretch reads GAGLAG.

It belongs to the MnmG family. TrmFO subfamily. Requires FAD as cofactor.

The protein localises to the cytoplasm. It catalyses the reaction uridine(54) in tRNA + (6R)-5,10-methylene-5,6,7,8-tetrahydrofolate + NADH + H(+) = 5-methyluridine(54) in tRNA + (6S)-5,6,7,8-tetrahydrofolate + NAD(+). It carries out the reaction uridine(54) in tRNA + (6R)-5,10-methylene-5,6,7,8-tetrahydrofolate + NADPH + H(+) = 5-methyluridine(54) in tRNA + (6S)-5,6,7,8-tetrahydrofolate + NADP(+). In terms of biological role, catalyzes the folate-dependent formation of 5-methyl-uridine at position 54 (M-5-U54) in all tRNAs. The protein is Methylenetetrahydrofolate--tRNA-(uracil-5-)-methyltransferase TrmFO of Heliobacterium modesticaldum (strain ATCC 51547 / Ice1).